A 380-amino-acid chain; its full sequence is Spore coat protein B (380 aa).

Residues 224 to 364 (GPKGSYKKED…SSGKQKEDYS (141 aa)) form a disordered region. Residues 229–248 (YKKEDQKNEQNQEDNNDKDS) show a composition bias toward basic and acidic residues. 3 stretches are compositionally biased toward low complexity: residues 275-288 (SKSG…SSSK), 296-315 (SSDY…SSSK), and 338-356 (SSDY…IKSS).

This is Spore coat protein B (cotB) from Bacillus subtilis (strain 168).